We begin with the raw amino-acid sequence, 460 residues long: Cysteine--tRNA ligase (460 aa).

A Zn(2+)-binding site is contributed by Cys-28. The 'HIGH' region signature appears at Val-30 to His-40. Zn(2+) is bound by residues Cys-209, His-234, and Glu-238. The short motif at Lys-266–Ser-270 is the 'KMSKS' region element. Residue Lys-269 coordinates ATP.

This sequence belongs to the class-I aminoacyl-tRNA synthetase family. In terms of assembly, monomer. The cofactor is Zn(2+).

Its subcellular location is the cytoplasm. It catalyses the reaction tRNA(Cys) + L-cysteine + ATP = L-cysteinyl-tRNA(Cys) + AMP + diphosphate. The polypeptide is Cysteine--tRNA ligase (Shewanella frigidimarina (strain NCIMB 400)).